The sequence spans 554 residues: Hydroxylamine reductase (554 aa).

C3, C6, C18, and C25 together coordinate [2Fe-2S] cluster. The hybrid [4Fe-2O-2S] cluster site is built by H252, E276, C320, C408, C436, C461, E495, and K497. C408 is subject to Cysteine persulfide.

It belongs to the HCP family. It depends on [2Fe-2S] cluster as a cofactor. The cofactor is hybrid [4Fe-2O-2S] cluster.

Its subcellular location is the cytoplasm. The enzyme catalyses A + NH4(+) + H2O = hydroxylamine + AH2 + H(+). Catalyzes the reduction of hydroxylamine to form NH(3) and H(2)O. This Shewanella baltica (strain OS155 / ATCC BAA-1091) protein is Hydroxylamine reductase.